The primary structure comprises 296 residues: CRISPR-associated endonuclease Cas1 2 (296 aa).

Positions 157, 224, and 237 each coordinate Mn(2+).

The protein belongs to the CRISPR-associated endonuclease Cas1 family. Homodimer, forms a heterotetramer with a Cas2 homodimer. Mg(2+) serves as cofactor. Requires Mn(2+) as cofactor.

Functionally, CRISPR (clustered regularly interspaced short palindromic repeat), is an adaptive immune system that provides protection against mobile genetic elements (viruses, transposable elements and conjugative plasmids). CRISPR clusters contain spacers, sequences complementary to antecedent mobile elements, and target invading nucleic acids. CRISPR clusters are transcribed and processed into CRISPR RNA (crRNA). Acts as a dsDNA endonuclease. Involved in the integration of spacer DNA into the CRISPR cassette. The protein is CRISPR-associated endonuclease Cas1 2 of Chlorobaculum tepidum (strain ATCC 49652 / DSM 12025 / NBRC 103806 / TLS) (Chlorobium tepidum).